The chain runs to 260 residues: DNA repair protein RecO (260 aa).

The protein belongs to the RecO family.

Its function is as follows. Involved in DNA repair and RecF pathway recombination. The protein is DNA repair protein RecO of Chlorobaculum parvum (strain DSM 263 / NCIMB 8327) (Chlorobium vibrioforme subsp. thiosulfatophilum).